The following is a 406-amino-acid chain: uncharacterized protein (406 aa).

This is an uncharacterized protein from Escherichia coli (strain K12).